A 129-amino-acid chain; its full sequence is Lysozyme C (129 aa).

The C-type lysozyme domain maps to 1–129; it reads KVYGRCELAA…VNAWTRGCRL (129 aa). 4 disulfides stabilise this stretch: cysteine 6–cysteine 127, cysteine 30–cysteine 115, cysteine 64–cysteine 80, and cysteine 76–cysteine 94. Catalysis depends on residues glutamate 35 and aspartate 52.

The protein belongs to the glycosyl hydrolase 22 family. Monomer.

It is found in the secreted. The enzyme catalyses Hydrolysis of (1-&gt;4)-beta-linkages between N-acetylmuramic acid and N-acetyl-D-glucosamine residues in a peptidoglycan and between N-acetyl-D-glucosamine residues in chitodextrins.. Lysozymes have primarily a bacteriolytic function; those in tissues and body fluids are associated with the monocyte-macrophage system and enhance the activity of immunoagents. The protein is Lysozyme C (LYZ) of Syrmaticus soemmerringii (Copper pheasant).